Reading from the N-terminus, the 440-residue chain is Cell division protein FtsA (440 aa).

The protein belongs to the FtsA/MreB family. Self-interacts. Interacts with FtsZ.

The protein resides in the cell membrane. Functionally, cell division protein that is involved in the assembly of the Z ring. May serve as a membrane anchor for the Z ring. The polypeptide is Cell division protein FtsA (Enterococcus faecalis (strain ATCC 700802 / V583)).